We begin with the raw amino-acid sequence, 724 residues long: Phenylalanine ammonia-lyase (724 aa).

Residue Tyr99 is the Proton donor/acceptor of the active site. A cross-link (5-imidazolinone (Ala-Gly)) is located at residues 204–206 (ASG). Ser205 carries the 2,3-didehydroalanine (Ser) modification. (E)-cinnamate is bound by residues Asn265, Gln355, Arg361, Asn391, Lys462, Glu490, and Asn493.

This sequence belongs to the PAL/histidase family. As to quaternary structure, homotetramer. Contains an active site 4-methylidene-imidazol-5-one (MIO), which is formed autocatalytically by cyclization and dehydration of residues Ala-Ser-Gly.

Its subcellular location is the cytoplasm. It carries out the reaction L-phenylalanine = (E)-cinnamate + NH4(+). The protein operates within phenylpropanoid metabolism; trans-cinnamate biosynthesis; trans-cinnamate from L-phenylalanine: step 1/1. Catalyzes the non-oxidative deamination of L-phenylalanine to form trans-cinnamic acid and a free ammonium ion. Facilitates the commitment step in phenylpropanoid pathways that produce secondary metabolites such as lignins, coumarins and flavonoids. The chain is Phenylalanine ammonia-lyase from Flammulina velutipes (Agaricus velutipes).